Here is a 379-residue protein sequence, read N- to C-terminus: Cytochrome b (379 aa).

Helical transmembrane passes span 33–53 (FGSL…FLAM), 77–98 (WLIR…YLHI), 113–133 (WNIG…GYVL), and 178–198 (FFAF…IHFF). Heme b contacts are provided by H83 and H97. Residues H182 and H196 each contribute to the heme b site. Residue H201 participates in a ubiquinone binding. The next 4 helical transmembrane spans lie at 226-246 (IKDI…VLFS), 288-308 (LGGV…PMLH), 320-340 (FSQC…WIGG), and 347-367 (YITI…IVSR).

This sequence belongs to the cytochrome b family. As to quaternary structure, the cytochrome bc1 complex contains 11 subunits: 3 respiratory subunits (MT-CYB, CYC1 and UQCRFS1), 2 core proteins (UQCRC1 and UQCRC2) and 6 low-molecular weight proteins (UQCRH/QCR6, UQCRB/QCR7, UQCRQ/QCR8, UQCR10/QCR9, UQCR11/QCR10 and a cleavage product of UQCRFS1). This cytochrome bc1 complex then forms a dimer. Heme b serves as cofactor.

The protein localises to the mitochondrion inner membrane. In terms of biological role, component of the ubiquinol-cytochrome c reductase complex (complex III or cytochrome b-c1 complex) that is part of the mitochondrial respiratory chain. The b-c1 complex mediates electron transfer from ubiquinol to cytochrome c. Contributes to the generation of a proton gradient across the mitochondrial membrane that is then used for ATP synthesis. The polypeptide is Cytochrome b (MT-CYB) (Dolichotis patagonum (Patagonian mara)).